A 188-amino-acid chain; its full sequence is Photosystem I assembly protein Ycf4 (188 aa).

Helical transmembrane passes span 26 to 46 (YFWA…GLSS) and 68 to 88 (LVMG…WFVI).

Belongs to the Ycf4 family.

Its subcellular location is the cellular thylakoid membrane. Seems to be required for the assembly of the photosystem I complex. This is Photosystem I assembly protein Ycf4 from Synechococcus elongatus (strain ATCC 33912 / PCC 7942 / FACHB-805) (Anacystis nidulans R2).